The following is a 417-amino-acid chain: MKVIVLGSGVIGVTAAWYLAEAGHEVIVLDRQPGPALETSYANAGQVSPGYASPWAAPGIPLKAIKWMLRRHAPLFIKPDGTWQQLRWMWQLLQNCTGTRYEQNKARMVRLAEYSRDCLDQLRADTGIEYEGRQRGTLQLFRTREQLDAALRDIEVLRFAHVPFELLPPSLLTKAEPALEHVKHKLTGGLWLPRDETGDCRLFTVRLADMAAARGVQFRYGQEISHLAIESGNVNGVVVSGVRVQADAYVVALAAYSVDVLKGVLDLPVYPVKGYSITVPIIDEALAPVSTVLDETYKTAVTRFDNRIRVGGMAELVGFDRRLSPRREGTLKLIVHDLFPGAADLSQTSFWTGLRPMTPDGPPIIGATPIPNLYLNTGHGTLGWTMACGSGKLLADIISGKKTDIQHDDLGIGRYAK.

3–17 provides a ligand contact to FAD; the sequence is VIVLGSGVIGVTAAW.

The protein belongs to the DadA oxidoreductase family. Requires FAD as cofactor.

It carries out the reaction a D-alpha-amino acid + A + H2O = a 2-oxocarboxylate + AH2 + NH4(+). It participates in amino-acid degradation; D-alanine degradation; NH(3) and pyruvate from D-alanine: step 1/1. In terms of biological role, oxidative deamination of D-amino acids. The protein is D-amino acid dehydrogenase of Methylobacillus flagellatus (strain ATCC 51484 / DSM 6875 / VKM B-1610 / KT).